The following is a 160-amino-acid chain: SsrA-binding protein (160 aa).

The protein belongs to the SmpB family.

It is found in the cytoplasm. Functionally, required for rescue of stalled ribosomes mediated by trans-translation. Binds to transfer-messenger RNA (tmRNA), required for stable association of tmRNA with ribosomes. tmRNA and SmpB together mimic tRNA shape, replacing the anticodon stem-loop with SmpB. tmRNA is encoded by the ssrA gene; the 2 termini fold to resemble tRNA(Ala) and it encodes a 'tag peptide', a short internal open reading frame. During trans-translation Ala-aminoacylated tmRNA acts like a tRNA, entering the A-site of stalled ribosomes, displacing the stalled mRNA. The ribosome then switches to translate the ORF on the tmRNA; the nascent peptide is terminated with the 'tag peptide' encoded by the tmRNA and targeted for degradation. The ribosome is freed to recommence translation, which seems to be the essential function of trans-translation. This is SsrA-binding protein from Chloroflexus aurantiacus (strain ATCC 29364 / DSM 637 / Y-400-fl).